We begin with the raw amino-acid sequence, 78 residues long: Acyl carrier protein (78 aa).

The region spanning 2–77 (SDTADRVQKI…DATKYIEEHK (76 aa)) is the Carrier domain. Ser37 carries the post-translational modification O-(pantetheine 4'-phosphoryl)serine.

This sequence belongs to the acyl carrier protein (ACP) family. 4'-phosphopantetheine is transferred from CoA to a specific serine of apo-ACP by AcpS. This modification is essential for activity because fatty acids are bound in thioester linkage to the sulfhydryl of the prosthetic group.

It is found in the cytoplasm. It functions in the pathway lipid metabolism; fatty acid biosynthesis. Carrier of the growing fatty acid chain in fatty acid biosynthesis. The protein is Acyl carrier protein of Erythrobacter litoralis (strain HTCC2594).